Consider the following 23-residue polypeptide: Dermaseptin-4 (23 aa).

Position 23 is a glutamine amide (Gln-23).

Expressed by the skin glands.

The protein localises to the secreted. In terms of biological role, antimicrobial peptide, active against the Gram-positive bacterium S.aureus, and the Gram-negative bacteria E.coli and P.aeruginosa. Has hemolytic activity (5% hemolysis at 128 ug/ml). This Phyllomedusa tarsius (Brownbelly leaf frog) protein is Dermaseptin-4.